The chain runs to 497 residues: Putative diacyglycerol O-acyltransferase MT3584 (497 aa).

Histidine 143 functions as the Proton acceptor in the catalytic mechanism.

It belongs to the long-chain O-acyltransferase family.

The catalysed reaction is an acyl-CoA + a 1,2-diacyl-sn-glycerol = a triacyl-sn-glycerol + CoA. Its pathway is glycerolipid metabolism; triacylglycerol biosynthesis. This Mycobacterium tuberculosis (strain CDC 1551 / Oshkosh) protein is Putative diacyglycerol O-acyltransferase MT3584.